The chain runs to 38 residues: Cytochrome b559 subunit beta (38 aa).

A helical membrane pass occupies residues 13–29; that stretch reads WLAVHALAVPTVFFLGS. Histidine 17 serves as a coordination point for heme.

The protein belongs to the PsbE/PsbF family. In terms of assembly, heterodimer of an alpha subunit and a beta subunit. PSII is composed of 1 copy each of membrane proteins PsbA, PsbB, PsbC, PsbD, PsbE, PsbF, PsbH, PsbI, PsbJ, PsbK, PsbL, PsbM, PsbT, PsbX, PsbY, PsbZ, Psb30/Ycf12, at least 3 peripheral proteins of the oxygen-evolving complex and a large number of cofactors. It forms dimeric complexes. Heme b is required as a cofactor.

The protein localises to the plastid. Its subcellular location is the chloroplast thylakoid membrane. Functionally, this b-type cytochrome is tightly associated with the reaction center of photosystem II (PSII). PSII is a light-driven water:plastoquinone oxidoreductase that uses light energy to abstract electrons from H(2)O, generating O(2) and a proton gradient subsequently used for ATP formation. It consists of a core antenna complex that captures photons, and an electron transfer chain that converts photonic excitation into a charge separation. This Ostreococcus tauri protein is Cytochrome b559 subunit beta.